The primary structure comprises 739 residues: Probable beta-glucosidase L (739 aa).

An N-terminal signal peptide occupies residues 1–17 (MQTLFLSLLAAAVTVHA). Asparagine 40 and asparagine 224 each carry an N-linked (GlcNAc...) asparagine glycan. The active site involves aspartate 252. N-linked (GlcNAc...) asparagine glycosylation occurs at asparagine 398.

Belongs to the glycosyl hydrolase 3 family.

It is found in the secreted. The enzyme catalyses Hydrolysis of terminal, non-reducing beta-D-glucosyl residues with release of beta-D-glucose.. The protein operates within glycan metabolism; cellulose degradation. Beta-glucosidases are one of a number of cellulolytic enzymes involved in the degradation of cellulosic biomass. Catalyzes the last step releasing glucose from the inhibitory cellobiose. This is Probable beta-glucosidase L (bglL) from Aspergillus fumigatus (strain CBS 144.89 / FGSC A1163 / CEA10) (Neosartorya fumigata).